A 364-amino-acid chain; its full sequence is MFNVYEFFNRINEVRPESRLDAGQPDIPVRREIIEEAVESLRRGETGYTSTGGIRELRERIAEFEGVSADEVIVAPGAKILIAAEIASAKKVAVVSPRWNAYSLIARQFWREVEVIKTTLDERWIPRVEEIKADLIIINYPNNPTGRVLSGKEIRGLLDVAEENGVKVLSDEVYAELSFTRFTPARELYENVVTVKGFSKLYSMTGFRLGYAIGERNEIRRIQRFIESTVTCVPPFVQRAGVKALELRDELIKEVRRAYLERVRMASKMLRGFDFVEPEGAFYIFLRTPQDGMAFAERLLSRGVAVFPGMAFGDYPNFIRISLSGKGLERGLRVIREELECALESRATEGWEGSSRGVSAEGSR.

Residues Gly23, Trp99, and Asn143 each contribute to the L-aspartate site. N6-(pyridoxal phosphate)lysine is present on Lys200. Arg320 contacts L-aspartate.

Belongs to the class-I pyridoxal-phosphate-dependent aminotransferase family. As to quaternary structure, homodimer. The cofactor is pyridoxal 5'-phosphate.

Its subcellular location is the cytoplasm. It catalyses the reaction L-aspartate + 2-oxoglutarate = oxaloacetate + L-glutamate. The polypeptide is Aspartate aminotransferase (aspC) (Thermococcus kodakarensis (strain ATCC BAA-918 / JCM 12380 / KOD1) (Pyrococcus kodakaraensis (strain KOD1))).